The chain runs to 558 residues: Receptor-like kinase LIP2 (558 aa).

The interval 1–45 (MHCFPCFSSPKNKKSSTTNETNDNNEPKPDDRRRAEETEEIEQSE) is disordered. Residues 15 to 24 (SSTTNETNDN) show a composition bias toward low complexity. Over residues 25-36 (NEPKPDDRRRAE) the composition is skewed to basic and acidic residues. Threonine 53 is modified (phosphothreonine). The Protein kinase domain maps to 64-343 (FRQECLLGEG…SDVMVALSFL (280 aa)). ATP is bound by residues 70–78 (LGEGGFGRV) and lysine 93. The residue at position 138 (tyrosine 138) is a Phosphotyrosine. The active-site Proton acceptor is the aspartate 191. A phosphoserine mark is found at serine 195 and serine 227. A Phosphothreonine modification is found at threonine 233. Phosphotyrosine is present on tyrosine 241. A disordered region spans residues 372–558 (HDSNLVSPPP…SDVAIDSIKE (187 aa)). Residues 401–418 (ESEKESVSKNEYKKKHEE) show a composition bias toward basic and acidic residues. Residues 419–431 (EDSSMESDDESDS) are compositionally biased toward acidic residues. Basic and acidic residues predominate over residues 432-448 (NSEHEKDQPPKPIDEKN). Low complexity predominate over residues 473-486 (SKSSQKSNDESTSS). 3 stretches are compositionally biased toward basic and acidic residues: residues 488-500 (YDSD…KGKE), 508-524 (EEKH…KTDD), and 547-558 (IKSDVAIDSIKE).

The protein belongs to the protein kinase superfamily. Ser/Thr protein kinase family. As to quaternary structure, interacts with PRK6. In terms of processing, palmitoylated. As to expression, expressed in mature pollen and in germinating pollen tubes.

It is found in the cell membrane. Involved in pollen tube guidance into micropyle. Participates in perception of the ovule-secreted peptide signal LURE1. This is Receptor-like kinase LIP2 from Arabidopsis thaliana (Mouse-ear cress).